The primary structure comprises 186 residues: ATP synthase subunit b (186 aa).

The helical transmembrane segment at 5-25 (LILNLLVLLAPAAVFAAGGGH) threads the bilayer.

Belongs to the ATPase B chain family. As to quaternary structure, F-type ATPases have 2 components, F(1) - the catalytic core - and F(0) - the membrane proton channel. F(1) has five subunits: alpha(3), beta(3), gamma(1), delta(1), epsilon(1). F(0) has three main subunits: a(1), b(2) and c(10-14). The alpha and beta chains form an alternating ring which encloses part of the gamma chain. F(1) is attached to F(0) by a central stalk formed by the gamma and epsilon chains, while a peripheral stalk is formed by the delta and b chains.

Its subcellular location is the cell inner membrane. F(1)F(0) ATP synthase produces ATP from ADP in the presence of a proton or sodium gradient. F-type ATPases consist of two structural domains, F(1) containing the extramembraneous catalytic core and F(0) containing the membrane proton channel, linked together by a central stalk and a peripheral stalk. During catalysis, ATP synthesis in the catalytic domain of F(1) is coupled via a rotary mechanism of the central stalk subunits to proton translocation. Its function is as follows. Component of the F(0) channel, it forms part of the peripheral stalk, linking F(1) to F(0). The protein is ATP synthase subunit b of Bdellovibrio bacteriovorus (strain ATCC 15356 / DSM 50701 / NCIMB 9529 / HD100).